Here is a 260-residue protein sequence, read N- to C-terminus: Carbonic anhydrase 3 (260 aa).

The residue at position 2 (Ala-2) is an N-acetylalanine. Residues 3–259 (KEWGYADHNG…IKGRIVKASF (257 aa)) form the Alpha-carbonic anhydrase domain. 4 positions are modified to phosphoserine: Ser-29, Ser-43, Ser-50, and Ser-55. Residues 64-67 (KTCR) are involved in proton transfer. Thr-73 is modified (phosphothreonine). The Zn(2+) site is built by His-94, His-96, and His-119. Position 127 is a phosphotyrosine (Tyr-127). S-glutathionyl cysteine is present on residues Cys-182 and Cys-187. 198–199 (TT) provides a ligand contact to substrate. Position 216 is a phosphothreonine (Thr-216). Ser-219 is subject to Phosphoserine.

This sequence belongs to the alpha-carbonic anhydrase family. The cofactor is Zn(2+). In terms of processing, S-thiolated both by thiol-disulfide exchange with glutathione disulfide and by oxyradical-initiated S-thiolation with reduced glutathione. S-glutathionylated in hepatocytes under oxidative stress.

It is found in the cytoplasm. It carries out the reaction hydrogencarbonate + H(+) = CO2 + H2O. Inhibited by acetazolamide. Functionally, reversible hydration of carbon dioxide. This is Carbonic anhydrase 3 (CA3) from Bos taurus (Bovine).